A 211-amino-acid polypeptide reads, in one-letter code: Probable nicotinate-nucleotide adenylyltransferase (211 aa).

Belongs to the NadD family.

It carries out the reaction nicotinate beta-D-ribonucleotide + ATP + H(+) = deamido-NAD(+) + diphosphate. Its pathway is cofactor biosynthesis; NAD(+) biosynthesis; deamido-NAD(+) from nicotinate D-ribonucleotide: step 1/1. Its function is as follows. Catalyzes the reversible adenylation of nicotinate mononucleotide (NaMN) to nicotinic acid adenine dinucleotide (NaAD). The polypeptide is Probable nicotinate-nucleotide adenylyltransferase (Wigglesworthia glossinidia brevipalpis).